A 477-amino-acid chain; its full sequence is Bile acid transporter (477 aa).

Transmembrane regions (helical) follow at residues 13–33 (FVPFAIAALLVSLIGGFTAVL), 50–70 (WISLALAMSSAACAPILGKLG), 83–103 (IVIFAAGNVLTAVATSLIFML), 107–127 (FIVGIGTAAISPIVMAYIVTE), 139–159 (LYMLISSGAVVVGPTCGGLIM), 166–186 (VMMWVCVALCVVVFLICTFSI), 206–226 (LVVVFFSLFLCIPSFGQNIGW), 228–248 (STAFIAAAAVALVALFILVMV), 272–292 (LILFLTQGLMMANMTNVIVFV), 301–321 (IISSFAISIMYIGMSLGSVII), 333–353 (VLTFSLVLTAIGCALMYLFKA), 359–379 (IFAASLGILGFGLGGNATIFM), 381–401 (VALSGLSSEVAGSGTGTYGLF), 406–426 (APFGVAVFVPMFANGVTANIA), and 444–464 (ISSIQTLTLVELGCIVVGIIL).

This sequence belongs to the major facilitator superfamily.

Its subcellular location is the cell membrane. Its pathway is lipid metabolism; bile acid degradation. The protein is Bile acid transporter (baiG) of Clostridium scindens (strain JCM 10418 / VPI 12708).